The following is a 254-amino-acid chain: Mannose-binding protein (254 aa).

The signal sequence occupies residues 1–19; the sequence is MTLLQPFSALLLCLSLMMA. A disordered region spans residues 46–99; the sequence is NGLPGRDGRDGPKGEKGDPGEGLRGLQGLPGKAGPQGLKGEVGPQGEKGQKGER. The span at 51-66 shows a compositional bias: basic and acidic residues; sequence RDGRDGPKGEKGDPGE. The residue at position 57 (Pro57) is a 4-hydroxyproline. 5-hydroxylysine is present on residues Lys58 and Lys61. O-linked (Gal...) hydroxylysine glycans are attached at residues Lys58 and Lys61. The residue at position 75 (Pro75) is a 4-hydroxyproline. A 5-hydroxylysine mark is found at Lys93 and Lys96. One can recognise a C-type lectin domain in the interval 140-250; that stretch reads VGKKMFVSTG…LDCSNSNIFI (111 aa). Intrachain disulfides connect Cys161-Cys252 and Cys229-Cys243.

Oligomeric complex of 3 or more homotrimers.

The protein localises to the secreted. Calcium-dependent lectin involved in innate immune defense. Binds mannose, fucose and N-acetylglucosamine on different microorganisms and activates the lectin complement pathway. The sequence is that of Mannose-binding protein from Gallus gallus (Chicken).